The sequence spans 296 residues: GTPase Era (296 aa).

The region spanning 7-174 is the Era-type G domain; the sequence is RAGFVAIVGR…LDEIAAGLPQ (168 aa). Residues 15–22 form a G1 region; the sequence is GRPNVGKS. A GTP-binding site is contributed by 15–22; sequence GRPNVGKS. Positions 41 to 45 are G2; the sequence is QTTRH. The interval 62–65 is G3; it reads DTPG. Residues 62–66 and 123–126 contribute to the GTP site; these read DTPGF and SKID. The segment at 123–126 is G4; the sequence is SKID. Residues 153–155 are G5; the sequence is VSA. Positions 205–281 constitute a KH type-2 domain; the sequence is VGDELPYGCT…HLEIYIKVRK (77 aa).

Belongs to the TRAFAC class TrmE-Era-EngA-EngB-Septin-like GTPase superfamily. Era GTPase family. In terms of assembly, monomer.

It is found in the cytoplasm. The protein localises to the cell inner membrane. In terms of biological role, an essential GTPase that binds both GDP and GTP, with rapid nucleotide exchange. Plays a role in 16S rRNA processing and 30S ribosomal subunit biogenesis and possibly also in cell cycle regulation and energy metabolism. The protein is GTPase Era of Bordetella parapertussis (strain 12822 / ATCC BAA-587 / NCTC 13253).